The sequence spans 471 residues: Probable ribonuclease FAU-1 (471 aa).

The protein belongs to the FAU-1 family.

In terms of biological role, probable RNase involved in rRNA stability through maturation and/or degradation of precursor rRNAs. Binds to RNA in loop regions with AU-rich sequences. The chain is Probable ribonuclease FAU-1 from Caldivirga maquilingensis (strain ATCC 700844 / DSM 13496 / JCM 10307 / IC-167).